The following is a 503-amino-acid chain: REST corepressor 2 (503 aa).

The disordered stretch occupies residues 1–62 (MPSVMEKSHG…IPECKPDNTS (62 aa)). The ELM2 domain occupies 41–126 (SMIRVGSDYQ…RSLADLANFT (86 aa)). Positions 127–178 (PFPEEWSVEDKVLFEQAFSFHGKSFQRIQQMLPEKLIPSLVKYYYSWKKTRS) constitute an SANT 1 domain. Coiled coils occupy residues 182-206 (VMDR…DQIK) and 286-314 (QLET…SLEG). The region spanning 327-378 (KLNARWTTDEQLLAVQAVRKYGKDFQAISEVLGNKTPSQVKTFFISYRRRFN) is the SANT 2 domain. The tract at residues 385–503 (EWEAEQEPSP…VGSHAESTFS (119 aa)) is disordered. Polar residues predominate over residues 399–412 (TDMSNKTSGSSQTP). Residues 423 to 442 (SVSSSSQPAPPAAAAAASLS) show a composition bias toward low complexity.

Belongs to the CoREST family.

Its subcellular location is the nucleus. Functionally, may act as a component of a corepressor complex that represses transcription. This chain is REST corepressor 2 (rcor2), found in Xenopus laevis (African clawed frog).